We begin with the raw amino-acid sequence, 188 residues long: Protein GrpE (188 aa).

Residues 1–16 (MEERNEQVVEEVKEAQ) show a composition bias toward basic and acidic residues. Positions 1 to 31 (MEERNEQVVEEVKEAQVEEAVTPENSEETVE) are disordered.

Belongs to the GrpE family. As to quaternary structure, homodimer.

The protein localises to the cytoplasm. Participates actively in the response to hyperosmotic and heat shock by preventing the aggregation of stress-denatured proteins, in association with DnaK and GrpE. It is the nucleotide exchange factor for DnaK and may function as a thermosensor. Unfolded proteins bind initially to DnaJ; upon interaction with the DnaJ-bound protein, DnaK hydrolyzes its bound ATP, resulting in the formation of a stable complex. GrpE releases ADP from DnaK; ATP binding to DnaK triggers the release of the substrate protein, thus completing the reaction cycle. Several rounds of ATP-dependent interactions between DnaJ, DnaK and GrpE are required for fully efficient folding. This is Protein GrpE from Bacillus anthracis.